We begin with the raw amino-acid sequence, 1113 residues long: StAR-related lipid transfer protein 13 (1113 aa).

An N-acetylmethionine modification is found at Met1. One can recognise an SAM domain in the interval 55–122; the sequence is QQEIEAKEAC…LNKCASMRLD (68 aa). Disordered stretches follow at residues 164–218, 230–256, and 308–343; these read PVAD…HSAD, SSLP…RTRA, and NGDL…STVS. The segment covering 179–188 has biased composition (polar residues); the sequence is NTASSESVLT. Over residues 197 to 214 the composition is skewed to low complexity; the sequence is SIHSESSGGSDSRSQSGH. The span at 230-245 shows a compositional bias: polar residues; the sequence is SSLPQSTREGLNQSFH. A compositionally biased stretch (low complexity) spans 322–340; it reads GLPCSSKSSGESSPLENSS. Ser411 carries the phosphoserine modification. Composition is skewed to polar residues over residues 421 to 435 and 529 to 549; these read SNGV…SLGR and PNQV…TTPS. Disordered regions lie at residues 421 to 443 and 514 to 578; these read SNGV…GMRE and HSTL…GASL. The region spanning 663 to 868 is the Rho-GAP domain; sequence VPLIVHVQRT…HMITECNRLF (206 aa). An START domain is found at 899 to 1109; that stretch reads LAESGATFHT…SFQPLVAEGP (211 aa).

As to quaternary structure, homodimer. Interacts with TAX1BP1.

It localises to the cytoplasm. Its subcellular location is the membrane. The protein localises to the mitochondrion membrane. It is found in the lipid droplet. In terms of biological role, may function as a GTPase-activating protein. In Mus musculus (Mouse), this protein is StAR-related lipid transfer protein 13 (Stard13).